The primary structure comprises 208 residues: Uracil phosphoribosyltransferase (208 aa).

Residues R78, R103, and 130 to 138 each bind 5-phospho-alpha-D-ribose 1-diphosphate; that span reads DPMLATGGS. Uracil contacts are provided by residues I193 and 198 to 200; that span reads GDA. D199 is a 5-phospho-alpha-D-ribose 1-diphosphate binding site.

It belongs to the UPRTase family. The cofactor is Mg(2+).

It catalyses the reaction UMP + diphosphate = 5-phospho-alpha-D-ribose 1-diphosphate + uracil. The protein operates within pyrimidine metabolism; UMP biosynthesis via salvage pathway; UMP from uracil: step 1/1. Allosterically activated by GTP. Functionally, catalyzes the conversion of uracil and 5-phospho-alpha-D-ribose 1-diphosphate (PRPP) to UMP and diphosphate. The protein is Uracil phosphoribosyltransferase of Thermus thermophilus (strain ATCC 27634 / DSM 579 / HB8).